The primary structure comprises 417 residues: Serine hydroxymethyltransferase (417 aa).

(6S)-5,6,7,8-tetrahydrofolate contacts are provided by residues Leu-121 and Gly-125–Leu-127. Lys-229 carries the post-translational modification N6-(pyridoxal phosphate)lysine. Position 355 to 357 (Ser-355 to Phe-357) interacts with (6S)-5,6,7,8-tetrahydrofolate.

This sequence belongs to the SHMT family. As to quaternary structure, homodimer. Requires pyridoxal 5'-phosphate as cofactor.

Its subcellular location is the cytoplasm. The catalysed reaction is (6R)-5,10-methylene-5,6,7,8-tetrahydrofolate + glycine + H2O = (6S)-5,6,7,8-tetrahydrofolate + L-serine. It functions in the pathway one-carbon metabolism; tetrahydrofolate interconversion. It participates in amino-acid biosynthesis; glycine biosynthesis; glycine from L-serine: step 1/1. In terms of biological role, catalyzes the reversible interconversion of serine and glycine with tetrahydrofolate (THF) serving as the one-carbon carrier. This reaction serves as the major source of one-carbon groups required for the biosynthesis of purines, thymidylate, methionine, and other important biomolecules. Also exhibits THF-independent aldolase activity toward beta-hydroxyamino acids, producing glycine and aldehydes, via a retro-aldol mechanism. The protein is Serine hydroxymethyltransferase of Xanthomonas euvesicatoria pv. vesicatoria (strain 85-10) (Xanthomonas campestris pv. vesicatoria).